Here is a 128-residue protein sequence, read N- to C-terminus: Large ribosomal subunit protein bL12 (128 aa).

Belongs to the bacterial ribosomal protein bL12 family. Homodimer. Part of the ribosomal stalk of the 50S ribosomal subunit. Forms a multimeric L10(L12)X complex, where L10 forms an elongated spine to which 2 to 4 L12 dimers bind in a sequential fashion. Binds GTP-bound translation factors.

Forms part of the ribosomal stalk which helps the ribosome interact with GTP-bound translation factors. Is thus essential for accurate translation. The chain is Large ribosomal subunit protein bL12 from Phenylobacterium zucineum (strain HLK1).